The chain runs to 102 residues: Protein YcgL (102 aa).

The YcgL domain maps to 14–98; it reads MFCVIYRSSK…PPEDLLKQHL (85 aa).

In Salmonella agona (strain SL483), this protein is Protein YcgL.